The primary structure comprises 526 residues: Peptide chain release factor 3 (526 aa).

The region spanning 8–277 is the tr-type G domain; that stretch reads NKRRTFAIIS…GLTEWAPKPQ (270 aa). GTP-binding positions include 17 to 24, 85 to 89, and 139 to 142; these read SHPDAGKT, DTPGH, and NKLD.

It belongs to the TRAFAC class translation factor GTPase superfamily. Classic translation factor GTPase family. PrfC subfamily.

It localises to the cytoplasm. Functionally, increases the formation of ribosomal termination complexes and stimulates activities of RF-1 and RF-2. It binds guanine nucleotides and has strong preference for UGA stop codons. It may interact directly with the ribosome. The stimulation of RF-1 and RF-2 is significantly reduced by GTP and GDP, but not by GMP. In Haemophilus ducreyi (strain 35000HP / ATCC 700724), this protein is Peptide chain release factor 3.